The sequence spans 338 residues: MIEADRLIAPDNPVFKDEDVIDRAIRPKALADYQGQDHVRGQMEIFIKAAQMRNEALDHLLIFGPPGLGKTTLANIVANEMDVNIRTTSGPVLEKAGDLAALLTNLEENDVLFIDEIHRLSPVVEEVLYPAMEDYQLDIMIGEGPAARSIKIDLPPFTLIGATTRAGSLTSPLRDRFGITQRLEYYKVEDLQNIVQRSADCLGLSMESQGALEVARRARGTPRIANRLLRRVRDYAEVKGDGHICPEVADKALNMLDVDAKGFDYMDRKLLLAIMEKFGGGPVGIDNMAAAIGEERDTIEDVLEPYLIQQGYLQRTPRGRIATDRAYLHFGIDKPSNR.

The large ATPase domain (RuvB-L) stretch occupies residues 4-186; that stretch reads ADRLIAPDNP…FGITQRLEYY (183 aa). ATP contacts are provided by residues isoleucine 25, arginine 26, glycine 67, lysine 70, threonine 71, threonine 72, 133-135, arginine 176, tyrosine 186, and arginine 223; that span reads EDY. Residue threonine 71 coordinates Mg(2+). The segment at 187–257 is small ATPAse domain (RuvB-S); it reads KVEDLQNIVQ…VADKALNMLD (71 aa). The segment at 260–338 is head domain (RuvB-H); that stretch reads AKGFDYMDRK…HFGIDKPSNR (79 aa). Positions 296, 315, and 320 each coordinate DNA.

This sequence belongs to the RuvB family. Homohexamer. Forms an RuvA(8)-RuvB(12)-Holliday junction (HJ) complex. HJ DNA is sandwiched between 2 RuvA tetramers; dsDNA enters through RuvA and exits via RuvB. An RuvB hexamer assembles on each DNA strand where it exits the tetramer. Each RuvB hexamer is contacted by two RuvA subunits (via domain III) on 2 adjacent RuvB subunits; this complex drives branch migration. In the full resolvosome a probable DNA-RuvA(4)-RuvB(12)-RuvC(2) complex forms which resolves the HJ.

It localises to the cytoplasm. The enzyme catalyses ATP + H2O = ADP + phosphate + H(+). In terms of biological role, the RuvA-RuvB-RuvC complex processes Holliday junction (HJ) DNA during genetic recombination and DNA repair, while the RuvA-RuvB complex plays an important role in the rescue of blocked DNA replication forks via replication fork reversal (RFR). RuvA specifically binds to HJ cruciform DNA, conferring on it an open structure. The RuvB hexamer acts as an ATP-dependent pump, pulling dsDNA into and through the RuvAB complex. RuvB forms 2 homohexamers on either side of HJ DNA bound by 1 or 2 RuvA tetramers; 4 subunits per hexamer contact DNA at a time. Coordinated motions by a converter formed by DNA-disengaged RuvB subunits stimulates ATP hydrolysis and nucleotide exchange. Immobilization of the converter enables RuvB to convert the ATP-contained energy into a lever motion, pulling 2 nucleotides of DNA out of the RuvA tetramer per ATP hydrolyzed, thus driving DNA branch migration. The RuvB motors rotate together with the DNA substrate, which together with the progressing nucleotide cycle form the mechanistic basis for DNA recombination by continuous HJ branch migration. Branch migration allows RuvC to scan DNA until it finds its consensus sequence, where it cleaves and resolves cruciform DNA. The protein is Holliday junction branch migration complex subunit RuvB of Vibrio atlanticus (strain LGP32) (Vibrio splendidus (strain Mel32)).